We begin with the raw amino-acid sequence, 484 residues long: tRNA sulfurtransferase (484 aa).

One can recognise a THUMP domain in the interval 63–167; it reads EAFAERLACI…NDNLYLIDKR (105 aa). ATP-binding positions include 185-186, K267, G289, and Q298; that span reads LI. C346 and C458 form a disulfide bridge. Residues 406–484 form the Rhodanese domain; that stretch reads ISAGEIIIDV…GYNNVKVYRP (79 aa). Residue C458 is the Cysteine persulfide intermediate of the active site.

Belongs to the ThiI family.

It localises to the cytoplasm. It catalyses the reaction [ThiI sulfur-carrier protein]-S-sulfanyl-L-cysteine + a uridine in tRNA + 2 reduced [2Fe-2S]-[ferredoxin] + ATP + H(+) = [ThiI sulfur-carrier protein]-L-cysteine + a 4-thiouridine in tRNA + 2 oxidized [2Fe-2S]-[ferredoxin] + AMP + diphosphate. The catalysed reaction is [ThiS sulfur-carrier protein]-C-terminal Gly-Gly-AMP + S-sulfanyl-L-cysteinyl-[cysteine desulfurase] + AH2 = [ThiS sulfur-carrier protein]-C-terminal-Gly-aminoethanethioate + L-cysteinyl-[cysteine desulfurase] + A + AMP + 2 H(+). The protein operates within cofactor biosynthesis; thiamine diphosphate biosynthesis. Catalyzes the ATP-dependent transfer of a sulfur to tRNA to produce 4-thiouridine in position 8 of tRNAs, which functions as a near-UV photosensor. Also catalyzes the transfer of sulfur to the sulfur carrier protein ThiS, forming ThiS-thiocarboxylate. This is a step in the synthesis of thiazole, in the thiamine biosynthesis pathway. The sulfur is donated as persulfide by IscS. The sequence is that of tRNA sulfurtransferase from Shewanella pealeana (strain ATCC 700345 / ANG-SQ1).